A 721-amino-acid chain; its full sequence is Glucans biosynthesis glucosyltransferase H (721 aa).

7 consecutive transmembrane segments (helical) span residues L54 to L74, V85 to L105, G404 to I424, F458 to I478, F493 to F513, Y548 to P568, and L569 to L589.

Belongs to the glycosyltransferase 2 family. OpgH subfamily.

Its subcellular location is the cell inner membrane. It participates in glycan metabolism; osmoregulated periplasmic glucan (OPG) biosynthesis. In terms of biological role, involved in the biosynthesis of osmoregulated periplasmic glucans (OPGs). The protein is Glucans biosynthesis glucosyltransferase H of Rhodopseudomonas palustris (strain TIE-1).